Here is a 395-residue protein sequence, read N- to C-terminus: Pyridinium-3,5-bisthiocarboxylic acid mononucleotide nickel insertion protein (395 aa).

This sequence belongs to the LarC family.

It catalyses the reaction Ni(II)-pyridinium-3,5-bisthiocarboxylate mononucleotide = pyridinium-3,5-bisthiocarboxylate mononucleotide + Ni(2+). In terms of biological role, involved in the biosynthesis of a nickel-pincer cofactor ((SCS)Ni(II) pincer complex). Binds Ni(2+), and functions in nickel delivery to pyridinium-3,5-bisthiocarboxylic acid mononucleotide (P2TMN), to form the mature cofactor. Is thus probably required for the activation of nickel-pincer cofactor-dependent enzymes. The polypeptide is Pyridinium-3,5-bisthiocarboxylic acid mononucleotide nickel insertion protein (Staphylococcus epidermidis (strain ATCC 35984 / DSM 28319 / BCRC 17069 / CCUG 31568 / BM 3577 / RP62A)).